The following is a 278-amino-acid chain: Envelope glycoprotein L (278 aa).

Residues 1-30 (MCRRPDCGFSFSPGPVILLWCCLLLPIVSS) form the signal peptide. In terms of domain architecture, gL betaherpesvirus-type spans 43-256 (VPAECPELTR…DKYYAGLPPE (214 aa)). The cysteines at positions 154 and 159 are disulfide-linked.

This sequence belongs to the herpesviridae glycoprotein L (gL) family. Betaherpesvirinae gL subfamily. Interacts with glycoprotein H (gH); this interaction is necessary for the correct processing and cell surface expression of gH. Forms the envelope pentamer complex (PC) composed of gH, gL, UL128, UL130, and UL131A. The pentamer interacts with host NRP2. Forms the envelope trimer complex composed of gH, gL, and gO. The trimer interacts with host PDGFRA. The trimer also interacts with host EPHA2.

It is found in the virion membrane. It localises to the host cell membrane. Its subcellular location is the host Golgi apparatus. The protein localises to the host trans-Golgi network. Functionally, the heterodimer glycoprotein H-glycoprotein L is required for the fusion of viral and plasma membranes leading to virus entry into the host cell. Acts as a functional inhibitor of gH and maintains gH in an inhibited form. Upon binding to host integrins, gL dissociates from gH leading to activation of the viral fusion glycoproteins gB and gH. In human cytomegalovirus, forms two distincts complexes to mediate viral entry, a trimer and a pentamer at the surface of the virion envelope. The gH-gL-gO trimer is required for infection in fibroblasts by interacting with host PDGFRA, and in glioblastoma cells by interacting with host EPHA2. The gH-gL-UL128-UL130-UL131A pentamer is essential for viral entry in epithelial, endothelial and myeloid cells via interaction with host NRP2. This is Envelope glycoprotein L from Homo sapiens (Human).